A 515-amino-acid chain; its full sequence is MVQPYKHEPLTDFTVEANRKAFEEALKKVEAELGKDYPLIIGGERVTTDEKIVSINPANKTEVIGRVSKANKELAEKAMKVADEAFKWWSKTKPEARADILFRAAAIVRRRKHEFSALMVKEAGKPWKEADADTAEAIDFMEYYARQMLKLKDGVPVESRPGETNRFFYIPLGVGVVISPWNFPFAIMAGTTVASLVTGNTVLLKPASATPVVAYKFAEVLEEAGLPAGVLNYIPGSGAEVGDYLVDHPRTRFISFTGSRDVGIRIYERAAKVHPGQIWLKRVIAEMGGKDGIVVDKEADLELAAQSIVASAFGFSGQKCSACSRAIIVEDVYDQVLNRVVELTKQLKVGDPADQSTFMGPVIDQSAYNKIMEYIEIGKKEGRLMTGGEGDDSKGFFIQPTVFADVDPNARIMQEEIFGPVVAFTKAKDFDHALEIANNTEYGLTGAVISRNRANLEKAREEFHVGNLYFNRGCTGAIVGYQPFGGFNMSGTDSKAGGPDYLILHMQAKTVSEMF.

Residues glutamate 286 and cysteine 320 contribute to the active site.

It belongs to the aldehyde dehydrogenase family. RocA subfamily.

It catalyses the reaction L-glutamate 5-semialdehyde + NAD(+) + H2O = L-glutamate + NADH + 2 H(+). Its pathway is amino-acid degradation; L-proline degradation into L-glutamate; L-glutamate from L-proline: step 2/2. The polypeptide is 1-pyrroline-5-carboxylate dehydrogenase (Geobacillus sp. (strain WCH70)).